A 379-amino-acid polypeptide reads, in one-letter code: Wnt inhibitory factor 1 (379 aa).

An N-terminal signal peptide occupies residues 1–28 (MARRRAFPAFALRLWSILPCLLLLRADA). Residues 38–177 (LWIDAHQARV…PQNAIFFKTC (140 aa)) enclose the WIF domain. A glycan (N-linked (GlcNAc...) asparagine) is linked at Asn-88. Intrachain disulfides connect Cys-140/Cys-177, Cys-182/Cys-192, Cys-186/Cys-198, Cys-200/Cys-209, Cys-214/Cys-224, Cys-218/Cys-230, and Cys-232/Cys-241. EGF-like domains are found at residues 178 to 210 (QQAECPGGCRNGGFCNERRVCECPDGFYGPHCE), 211 to 242 (KALCIPRCMNGGLCVTPGFCICPPGFYGVNCD), 243 to 271 (KANCSTTCFNGGTCFYPGKCICPPGLEGE), 274 to 306 (ELSKCPQPCRNGGKCIGKSKCKCPKGYQGDLCS), and 307 to 338 (KPVCEPGCGAHGTCHEPNKCQCREGWHGRHCN). An N-linked (GlcNAc...) asparagine glycan is attached at Asn-245. Disulfide bonds link Cys-246–Cys-256, Cys-250–Cys-262, Cys-278–Cys-288, Cys-282–Cys-294, Cys-296–Cys-305, Cys-310–Cys-320, Cys-314–Cys-326, and Cys-328–Cys-337. Residues 348 to 379 (APRPAGAGLERHTPSLKKAEDRRDPPESNYIW) are disordered. The segment covering 356–373 (LERHTPSLKKAEDRRDPP) has biased composition (basic and acidic residues).

In terms of assembly, interacts with MYOC. As to expression, expression highest in heart and lung. Lower in brain and eye.

The protein resides in the secreted. Functionally, binds to WNT proteins and inhibits their activities. May be involved in mesoderm segmentation. This chain is Wnt inhibitory factor 1 (Wif1), found in Mus musculus (Mouse).